Here is a 193-residue protein sequence, read N- to C-terminus: uncharacterized protein (193 aa).

An N-terminal signal peptide occupies residues 1–26 (MRNVFVGALCMCGMSFVFSDSVRSAA).

This is an uncharacterized protein from Treponema pallidum (strain Nichols).